Consider the following 648-residue polypeptide: Zinc finger protein 202 (648 aa).

A Glycyl lysine isopeptide (Lys-Gly) (interchain with G-Cter in SUMO2) cross-link involves residue lysine 22. The 82-residue stretch at 46 to 127 (HQNFRRFRYQ…VTLVEGLQKQ (82 aa)) folds into the SCAN box domain. Positions 146–221 (SEETVHLGVE…PDLPAERSSG (76 aa)) are disordered. Polar residues predominate over residues 165-182 (PVQSSTPEQSPEETTQSP). In terms of domain architecture, KRAB spans 237–308 (VTFKDVAVCF…DIQEPQETQE (72 aa)). 2 consecutive C2H2-type zinc fingers follow at residues 397-419 (HDCS…LRTH) and 425-447 (YKCM…QKVH). Residues lysine 454 and lysine 460 each participate in a glycyl lysine isopeptide (Lys-Gly) (interchain with G-Cter in SUMO2) cross-link. A Phosphoserine modification is found at serine 466. Residues 481 to 503 (YRCDDCGKHFRWTSDLVRHQRTH) form a C2H2-type 3 zinc finger. Glycyl lysine isopeptide (Lys-Gly) (interchain with G-Cter in SUMO2) cross-links involve residues lysine 507 and lysine 521. C2H2-type zinc fingers lie at residues 509–531 (FFCT…QRIH), 537–559 (YLCG…RKTH), 565–587 (YLCS…LRGH), 593–615 (CRCN…QRTH), and 621–643 (FTCP…QRTH).

As to quaternary structure, interacts with SDP1. As to expression, highly expressed in testis. Also expressed in breast carcinoma cell lines.

The protein localises to the nucleus. Transcriptional repressor that binds to elements found predominantly in genes that participate in lipid metabolism. Among its targets are structural components of lipoprotein particles (apolipoproteins AIV, CIII, and E), enzymes involved in lipid processing (lipoprotein lipase, lecithin cholesteryl ester transferase), transporters involved in lipid homeostasis (ABCA1, ABCG1), and several genes involved in processes related to energy metabolism and vascular disease. The protein is Zinc finger protein 202 (ZNF202) of Homo sapiens (Human).